The primary structure comprises 121 residues: Probable V-type proton ATPase subunit F (121 aa).

It belongs to the V-ATPase F subunit family. In terms of assembly, V-ATPase is a heteromultimeric enzyme made up of two complexes: the ATP-hydrolytic V1 complex and the proton translocation V0 complex. The V1 complex consists of three catalytic AB heterodimers that form a heterohexamer, three peripheral stalks each consisting of EG heterodimers, one central rotor including subunits D and F, and the regulatory subunits C and H. The proton translocation complex V0 consists of the proton transport subunit a, a ring of proteolipid subunits c9c'', rotary subunit d, subunits e and f, and the accessory subunits vah-19/Ac45 and vah-20/PRR.

In terms of biological role, subunit of the V1 complex of vacuolar(H+)-ATPase (V-ATPase), a multisubunit enzyme composed of a peripheral complex (V1) that hydrolyzes ATP and a membrane integral complex (V0) that translocates protons. V-ATPase is responsible for acidifying and maintaining the pH of intracellular compartments and in some cell types, is targeted to the plasma membrane, where it is responsible for acidifying the extracellular environment. Required along with other vacuolar ATPase components for the removal of protein aggregates which form in immature oocytes in the distal gonad. This removal occurs as the oocytes mature and move to the proximal gonad, is triggered by the introduction of sperm through mating and occurs before fertilization. The introduction of sperm triggers V-ATPase accumulation in proximal oocytes and induces lysosomal acidification which leads to engulfing of protein aggregates by lysosomes and subsequent clearance of the aggregates. Lysosomal acidification also leads to changes in mitochondrial morphology and function. Mitochondria in distal immature oocytes are fragmented, produce high levels of reactive oxygen species (ROS) and have high membrane potential, indicative of metabolic inactivity. In contrast, mitochondria in proximal mature oocytes are tubular with lower ROS levels and membrane potential, indicative of an active metabolic state required for aggregate mobilization before clearance. The polypeptide is Probable V-type proton ATPase subunit F (Caenorhabditis elegans).